The sequence spans 389 residues: 23S rRNA (uracil(747)-C(5))-methyltransferase RlmC (389 aa).

C6, C14, C17, and C92 together coordinate [4Fe-4S] cluster. S-adenosyl-L-methionine contacts are provided by Q217, F246, E273, and N319. Residue C346 is the Nucleophile of the active site.

The protein belongs to the class I-like SAM-binding methyltransferase superfamily. RNA M5U methyltransferase family. RlmC subfamily.

It carries out the reaction uridine(747) in 23S rRNA + S-adenosyl-L-methionine = 5-methyluridine(747) in 23S rRNA + S-adenosyl-L-homocysteine + H(+). Catalyzes the formation of 5-methyl-uridine at position 747 (m5U747) in 23S rRNA. This chain is 23S rRNA (uracil(747)-C(5))-methyltransferase RlmC, found in Glaesserella parasuis serovar 5 (strain SH0165) (Haemophilus parasuis).